Here is a 538-residue protein sequence, read N- to C-terminus: Chaperonin GroEL 1 (538 aa).

ATP is bound by residues 29–32 (TLGP), 86–90 (DGTTT), glycine 413, 478–480 (NAA), and aspartate 494.

The protein belongs to the chaperonin (HSP60) family. In terms of assembly, forms a cylinder of 14 subunits composed of two heptameric rings stacked back-to-back. Interacts with the co-chaperonin GroES.

The protein localises to the cytoplasm. The enzyme catalyses ATP + H2O + a folded polypeptide = ADP + phosphate + an unfolded polypeptide.. Functionally, together with its co-chaperonin GroES, plays an essential role in assisting protein folding. The GroEL-GroES system forms a nano-cage that allows encapsulation of the non-native substrate proteins and provides a physical environment optimized to promote and accelerate protein folding. This chain is Chaperonin GroEL 1, found in Corynebacterium glutamicum (strain ATCC 13032 / DSM 20300 / JCM 1318 / BCRC 11384 / CCUG 27702 / LMG 3730 / NBRC 12168 / NCIMB 10025 / NRRL B-2784 / 534).